The primary structure comprises 282 residues: ATP phosphoribosyltransferase (282 aa).

Belongs to the ATP phosphoribosyltransferase family. Long subfamily. Mg(2+) serves as cofactor.

It localises to the cytoplasm. The enzyme catalyses 1-(5-phospho-beta-D-ribosyl)-ATP + diphosphate = 5-phospho-alpha-D-ribose 1-diphosphate + ATP. It functions in the pathway amino-acid biosynthesis; L-histidine biosynthesis; L-histidine from 5-phospho-alpha-D-ribose 1-diphosphate: step 1/9. With respect to regulation, feedback inhibited by histidine. Catalyzes the condensation of ATP and 5-phosphoribose 1-diphosphate to form N'-(5'-phosphoribosyl)-ATP (PR-ATP). Has a crucial role in the pathway because the rate of histidine biosynthesis seems to be controlled primarily by regulation of HisG enzymatic activity. This Pyrobaculum islandicum (strain DSM 4184 / JCM 9189 / GEO3) protein is ATP phosphoribosyltransferase.